The chain runs to 566 residues: Poly(A) polymerase pla1 (566 aa).

ATP-binding positions include 86–88 (YGS), 99–101 (DID), D153, K214, Y223, and 232–233 (GV). 3 residues coordinate Mg(2+): D99, D101, and D153. 2 disordered regions span residues 437-463 (HEKL…SENG) and 530-566 (DEVF…VSTA).

Belongs to the poly(A) polymerase family. The cofactor is Mg(2+). It depends on Mn(2+) as a cofactor.

It is found in the nucleus. It carries out the reaction RNA(n) + ATP = RNA(n)-3'-adenine ribonucleotide + diphosphate. Polymerase that creates the 3'-poly(A) tail of mRNA's. May acquire specificity through interaction with a cleavage and polyadenylation factor (CF I). The chain is Poly(A) polymerase pla1 (pla1) from Schizosaccharomyces pombe (strain 972 / ATCC 24843) (Fission yeast).